Here is a 370-residue protein sequence, read N- to C-terminus: 4-hydroxy-3-methylbut-2-en-1-yl diphosphate synthase (flavodoxin) (370 aa).

Cys-270, Cys-273, Cys-305, and Glu-312 together coordinate [4Fe-4S] cluster.

It belongs to the IspG family. [4Fe-4S] cluster serves as cofactor.

The catalysed reaction is (2E)-4-hydroxy-3-methylbut-2-enyl diphosphate + oxidized [flavodoxin] + H2O + 2 H(+) = 2-C-methyl-D-erythritol 2,4-cyclic diphosphate + reduced [flavodoxin]. It participates in isoprenoid biosynthesis; isopentenyl diphosphate biosynthesis via DXP pathway; isopentenyl diphosphate from 1-deoxy-D-xylulose 5-phosphate: step 5/6. Converts 2C-methyl-D-erythritol 2,4-cyclodiphosphate (ME-2,4cPP) into 1-hydroxy-2-methyl-2-(E)-butenyl 4-diphosphate. The polypeptide is 4-hydroxy-3-methylbut-2-en-1-yl diphosphate synthase (flavodoxin) (Hamiltonella defensa subsp. Acyrthosiphon pisum (strain 5AT)).